The following is a 449-amino-acid chain: Bifunctional protein GlmU (449 aa).

Residues 1–228 form a pyrophosphorylase region; the sequence is MSTALVILAA…EAETLGINSR (228 aa). UDP-N-acetyl-alpha-D-glucosamine-binding positions include 8–11, Lys22, Gln75, 80–81, 103–105, Gly140, Glu154, Asn169, and Asn226; these read LAAG, GT, and YGD. Asp105 contributes to the Mg(2+) binding site. Residue Asn226 participates in Mg(2+) binding. A linker region spans residues 229-249; that stretch reads ADLAAAEAVFQAHARAELLDI. Positions 250 to 449 are N-acetyltransferase; the sequence is GVTLTAPETV…RAKKAAKAKG (200 aa). UDP-N-acetyl-alpha-D-glucosamine-binding residues include Arg315 and Lys333. His345 serves as the catalytic Proton acceptor. UDP-N-acetyl-alpha-D-glucosamine contacts are provided by Tyr348 and Asn359. Acetyl-CoA contacts are provided by residues Ala362, 368 to 369, Ser387, Thr405, and Arg422; that span reads NY.

This sequence in the N-terminal section; belongs to the N-acetylglucosamine-1-phosphate uridyltransferase family. The protein in the C-terminal section; belongs to the transferase hexapeptide repeat family. Homotrimer. It depends on Mg(2+) as a cofactor.

It is found in the cytoplasm. The enzyme catalyses alpha-D-glucosamine 1-phosphate + acetyl-CoA = N-acetyl-alpha-D-glucosamine 1-phosphate + CoA + H(+). It catalyses the reaction N-acetyl-alpha-D-glucosamine 1-phosphate + UTP + H(+) = UDP-N-acetyl-alpha-D-glucosamine + diphosphate. It functions in the pathway nucleotide-sugar biosynthesis; UDP-N-acetyl-alpha-D-glucosamine biosynthesis; N-acetyl-alpha-D-glucosamine 1-phosphate from alpha-D-glucosamine 6-phosphate (route II): step 2/2. It participates in nucleotide-sugar biosynthesis; UDP-N-acetyl-alpha-D-glucosamine biosynthesis; UDP-N-acetyl-alpha-D-glucosamine from N-acetyl-alpha-D-glucosamine 1-phosphate: step 1/1. The protein operates within bacterial outer membrane biogenesis; LPS lipid A biosynthesis. Its function is as follows. Catalyzes the last two sequential reactions in the de novo biosynthetic pathway for UDP-N-acetylglucosamine (UDP-GlcNAc). The C-terminal domain catalyzes the transfer of acetyl group from acetyl coenzyme A to glucosamine-1-phosphate (GlcN-1-P) to produce N-acetylglucosamine-1-phosphate (GlcNAc-1-P), which is converted into UDP-GlcNAc by the transfer of uridine 5-monophosphate (from uridine 5-triphosphate), a reaction catalyzed by the N-terminal domain. This chain is Bifunctional protein GlmU, found in Ruegeria sp. (strain TM1040) (Silicibacter sp.).